Here is a 220-residue protein sequence, read N- to C-terminus: GTP cyclohydrolase 1 (220 aa).

Positions 109, 112, and 180 each coordinate Zn(2+).

It belongs to the GTP cyclohydrolase I family. As to quaternary structure, toroid-shaped homodecamer, composed of two pentamers of five dimers.

It catalyses the reaction GTP + H2O = 7,8-dihydroneopterin 3'-triphosphate + formate + H(+). The protein operates within cofactor biosynthesis; 7,8-dihydroneopterin triphosphate biosynthesis; 7,8-dihydroneopterin triphosphate from GTP: step 1/1. The chain is GTP cyclohydrolase 1 from Yersinia pseudotuberculosis serotype O:1b (strain IP 31758).